The chain runs to 102 residues: Complement inhibitor RaCI3 (102 aa).

The first 24 residues, Met1–Ser24, serve as a signal peptide directing secretion. 3 cysteine pairs are disulfide-bonded: Cys37-Cys61, Cys42-Cys63, and Cys57-Cys78.

The protein belongs to the RaCI family. Expressed in salivary glands.

Its subcellular location is the secreted. Its function is as follows. Complement inhibitor. Prevents complement-mediated C5 activation by binding to C5. Binds C5 at a different binding site than the other tick complement inhibitors OmCI and CirpT1, and the drug eculizumab. Inhibits complement in human and guinea pig but not in other species tested (rabbit, rat, mouse, and pig). In Dermacentor andersoni (Rocky mountain wood tick), this protein is Complement inhibitor RaCI3.